The sequence spans 157 residues: Ribosome maturation factor RimP (157 aa).

The protein belongs to the RimP family.

The protein resides in the cytoplasm. Required for maturation of 30S ribosomal subunits. The sequence is that of Ribosome maturation factor RimP from Petrotoga mobilis (strain DSM 10674 / SJ95).